Here is a 340-residue protein sequence, read N- to C-terminus: Glycerol-3-phosphate dehydrogenase [NAD(P)+] (340 aa).

Residues Ser14, Phe15, Arg35, and Lys109 each contribute to the NADPH site. The sn-glycerol 3-phosphate site is built by Lys109 and Gly137. Ala141 contacts NADPH. Lys192, Asp245, Ser255, Arg256, and Asn257 together coordinate sn-glycerol 3-phosphate. The active-site Proton acceptor is the Lys192. Arg256 is a binding site for NADPH. Positions 280 and 282 each coordinate NADPH.

Belongs to the NAD-dependent glycerol-3-phosphate dehydrogenase family.

The protein resides in the cytoplasm. The enzyme catalyses sn-glycerol 3-phosphate + NAD(+) = dihydroxyacetone phosphate + NADH + H(+). The catalysed reaction is sn-glycerol 3-phosphate + NADP(+) = dihydroxyacetone phosphate + NADPH + H(+). The protein operates within membrane lipid metabolism; glycerophospholipid metabolism. Functionally, catalyzes the reduction of the glycolytic intermediate dihydroxyacetone phosphate (DHAP) to sn-glycerol 3-phosphate (G3P), the key precursor for phospholipid synthesis. The chain is Glycerol-3-phosphate dehydrogenase [NAD(P)+] from Teredinibacter turnerae (strain ATCC 39867 / T7901).